Here is a 258-residue protein sequence, read N- to C-terminus: Acyl-[acyl-carrier-protein]--UDP-N-acetylglucosamine O-acyltransferase (258 aa).

It belongs to the transferase hexapeptide repeat family. LpxA subfamily. Homotrimer.

The protein localises to the cytoplasm. It catalyses the reaction a (3R)-hydroxyacyl-[ACP] + UDP-N-acetyl-alpha-D-glucosamine = a UDP-3-O-[(3R)-3-hydroxyacyl]-N-acetyl-alpha-D-glucosamine + holo-[ACP]. It functions in the pathway glycolipid biosynthesis; lipid IV(A) biosynthesis; lipid IV(A) from (3R)-3-hydroxytetradecanoyl-[acyl-carrier-protein] and UDP-N-acetyl-alpha-D-glucosamine: step 1/6. Involved in the biosynthesis of lipid A, a phosphorylated glycolipid that anchors the lipopolysaccharide to the outer membrane of the cell. The sequence is that of Acyl-[acyl-carrier-protein]--UDP-N-acetylglucosamine O-acyltransferase from Azotobacter vinelandii (strain DJ / ATCC BAA-1303).